The following is a 469-amino-acid chain: Bifunctional protein GlmU (469 aa).

The segment at 1-236 (MLNIKLNIVI…ISEINGINDC (236 aa)) is pyrophosphorylase. Residues 11–14 (LAAG), K25, Q83, 88–89 (GT), 110–112 (YGD), G147, E161, N176, and N234 contribute to the UDP-N-acetyl-alpha-D-glucosamine site. Position 112 (D112) interacts with Mg(2+). N234 is a Mg(2+) binding site. The interval 237-257 (AQLANLERLYQKEQAESLLRI) is linker. An N-acetyltransferase region spans residues 258–469 (GVIIADPNRF…KKKIRYNIIY (212 aa)). R340 and K358 together coordinate UDP-N-acetyl-alpha-D-glucosamine. Catalysis depends on H370, which acts as the Proton acceptor. UDP-N-acetyl-alpha-D-glucosamine is bound by residues Y373 and N384. Residues A387, 393 to 394 (NY), S412, A430, and R447 each bind acetyl-CoA.

It in the N-terminal section; belongs to the N-acetylglucosamine-1-phosphate uridyltransferase family. The protein in the C-terminal section; belongs to the transferase hexapeptide repeat family. In terms of assembly, homotrimer. Requires Mg(2+) as cofactor.

The protein resides in the cytoplasm. The enzyme catalyses alpha-D-glucosamine 1-phosphate + acetyl-CoA = N-acetyl-alpha-D-glucosamine 1-phosphate + CoA + H(+). The catalysed reaction is N-acetyl-alpha-D-glucosamine 1-phosphate + UTP + H(+) = UDP-N-acetyl-alpha-D-glucosamine + diphosphate. It functions in the pathway nucleotide-sugar biosynthesis; UDP-N-acetyl-alpha-D-glucosamine biosynthesis; N-acetyl-alpha-D-glucosamine 1-phosphate from alpha-D-glucosamine 6-phosphate (route II): step 2/2. The protein operates within nucleotide-sugar biosynthesis; UDP-N-acetyl-alpha-D-glucosamine biosynthesis; UDP-N-acetyl-alpha-D-glucosamine from N-acetyl-alpha-D-glucosamine 1-phosphate: step 1/1. Its pathway is bacterial outer membrane biogenesis; LPS lipid A biosynthesis. Catalyzes the last two sequential reactions in the de novo biosynthetic pathway for UDP-N-acetylglucosamine (UDP-GlcNAc). The C-terminal domain catalyzes the transfer of acetyl group from acetyl coenzyme A to glucosamine-1-phosphate (GlcN-1-P) to produce N-acetylglucosamine-1-phosphate (GlcNAc-1-P), which is converted into UDP-GlcNAc by the transfer of uridine 5-monophosphate (from uridine 5-triphosphate), a reaction catalyzed by the N-terminal domain. This Baumannia cicadellinicola subsp. Homalodisca coagulata protein is Bifunctional protein GlmU.